The primary structure comprises 352 residues: Ubiquitin thioesterase otulin (352 aa).

Residues 1–49 (MSRGTMPQPGAWPGASCAETPAREAGAAARDGGKVTAGAQPRAATRCPA) are disordered. A compositionally biased stretch (low complexity) spans 18-30 (AETPAREAGAAAR). Residues 49–73 (AEHEEDMYRAADEIEKEKELLIHER) are a coiled coil. The PIM motif motif lies at 52–57 (EEDMYR). Tyr56 carries the post-translational modification Phosphotyrosine. 2 linear diubiquitin binding regions span residues 95–96 (EW) and 124–126 (RGD). In terms of domain architecture, OTU spans 118–346 (TSIRRVRGDN…DRHYNIPVRV (229 aa)). Residue Asp126 is part of the active site. Cys129 acts as the Nucleophile in catalysis. Linear diubiquitin binding regions lie at residues 255–259 (FFSVL), 283–289 (TGGLEQV), and 336–338 (DDR). His339 is a catalytic residue. Residues 349 to 352 (ETSV) carry the PDZ-binding motif.

This sequence belongs to the peptidase C65 family. Otulin subfamily. Interacts (via the PUB domain) with RNF31 (via the PIM motif); the interaction is direct. Interacts with DVL2. Post-translationally, ubiquitinated. In terms of processing, acetylated. Phosphorylated. Phosphorylation at Tyr-56 prevents interaction with RNF31; dephosphorylation promotes interaction with RNF31 and the LUBAC complex.

Its subcellular location is the cytoplasm. The enzyme catalyses Thiol-dependent hydrolysis of ester, thioester, amide, peptide and isopeptide bonds formed by the C-terminal Gly of ubiquitin (a 76-residue protein attached to proteins as an intracellular targeting signal).. Deubiquitinase that specifically removes linear ('Met-1'-linked) polyubiquitin chains to substrates and acts as a regulator of angiogenesis and innate immune response. Required during angiogenesis, craniofacial and neuronal development by regulating the canonical Wnt signaling together with the LUBAC complex. Acts as a negative regulator of NF-kappa-B by regulating the activity of the LUBAC complex. OTULIN function is mainly restricted to homeostasis of the LUBAC complex: acts by removing 'Met-1'-linked autoubiquitination of the LUBAC complex, thereby preventing inactivation of the LUBAC complex. Acts as a key negative regulator of inflammation by restricting spontaneous inflammation and maintaining immune homeostasis. In myeloid cell, required to prevent unwarranted secretion of cytokines leading to inflammation and autoimmunity by restricting linear polyubiquitin formation. Plays a role in innate immune response by restricting linear polyubiquitin formation on LUBAC complex in response to NOD2 stimulation, probably to limit NOD2-dependent pro-inflammatory signaling. In Mus musculus (Mouse), this protein is Ubiquitin thioesterase otulin.